We begin with the raw amino-acid sequence, 445 residues long: Trigger factor (445 aa).

In terms of domain architecture, PPIase FKBP-type spans 162–247 (GDQVTIDAIG…IKAVHTAEPT (86 aa)).

Belongs to the FKBP-type PPIase family. Tig subfamily.

It localises to the cytoplasm. It catalyses the reaction [protein]-peptidylproline (omega=180) = [protein]-peptidylproline (omega=0). Functionally, involved in protein export. Acts as a chaperone by maintaining the newly synthesized protein in an open conformation. Functions as a peptidyl-prolyl cis-trans isomerase. This Rickettsia massiliae (strain Mtu5) protein is Trigger factor.